The primary structure comprises 395 residues: Xylose isomerase (395 aa).

Catalysis depends on residues His54 and Glu57. The tract at residues Ala80 to Asp108 is disordered. Mg(2+) is bound by residues Glu189, Glu225, His228, Asp253, Asp263, Asp265, and Asp295.

Belongs to the xylose isomerase family. As to quaternary structure, homotetramer. Requires Mg(2+) as cofactor.

It localises to the cytoplasm. It carries out the reaction alpha-D-xylose = alpha-D-xylulofuranose. The chain is Xylose isomerase from Streptomyces lividans.